The primary structure comprises 1414 residues: DNA-directed RNA polymerase subunit beta' (1414 aa).

Zn(2+) contacts are provided by Cys-70, Cys-72, Cys-85, and Cys-88. Asp-460, Asp-462, and Asp-464 together coordinate Mg(2+). 4 residues coordinate Zn(2+): Cys-814, Cys-888, Cys-895, and Cys-898. A compositionally biased stretch (low complexity) spans 1392 to 1403 (EQALSEALKSSA). The interval 1392–1414 (EQALSEALKSSAPQEAKAAQKDE) is disordered.

Belongs to the RNA polymerase beta' chain family. The RNAP catalytic core consists of 2 alpha, 1 beta, 1 beta' and 1 omega subunit. When a sigma factor is associated with the core the holoenzyme is formed, which can initiate transcription. Requires Mg(2+) as cofactor. Zn(2+) serves as cofactor.

The catalysed reaction is RNA(n) + a ribonucleoside 5'-triphosphate = RNA(n+1) + diphosphate. Its function is as follows. DNA-dependent RNA polymerase catalyzes the transcription of DNA into RNA using the four ribonucleoside triphosphates as substrates. This chain is DNA-directed RNA polymerase subunit beta', found in Coxiella burnetii (strain Dugway 5J108-111).